An 84-amino-acid chain; its full sequence is MASSKNGTVLFVSLMILLLISTGVKAYCERVRSRSAPHDICKKKNGNAVCKEKCWTIEKYQNGRCLILPKTTKLDCYCYHFDQC.

Residues 1 to 26 (MASSKNGTVLFVSLMILLLISTGVKA) form the signal peptide. 4 disulfides stabilise this stretch: Cys28–Cys84, Cys41–Cys65, Cys50–Cys76, and Cys54–Cys78.

The protein belongs to the DEFL family.

It is found in the secreted. In Arabidopsis thaliana (Mouse-ear cress), this protein is Putative defensin-like protein 38.